The following is a 601-amino-acid chain: Threonine dehydratase (601 aa).

Residues 1 to 51 (MEVLCQAPAGNSNFACNPKFTAIRTRAISSNDTFKVISSTGNNKKMKGAIR) constitute a chloroplast transit peptide. 2 consecutive ACT-like domains span residues 427-499 (ALLA…NLTN) and 521-592 (IFCQ…IESL).

The protein belongs to the serine/threonine dehydratase family. Pyridoxal 5'-phosphate is required as a cofactor.

The protein localises to the plastid. It localises to the chloroplast. It carries out the reaction L-threonine = 2-oxobutanoate + NH4(+). It participates in amino-acid biosynthesis; L-isoleucine biosynthesis; 2-oxobutanoate from L-threonine: step 1/1. Catalyzes the conversion of threonine to alpha-keto butyrate in isoleucine (Ile) biosynthesis. Required for JA-Ile biosynthesis, a signaling molecule involved in defense and resistance to the herbivore Manduca sexta caterpillars. The polypeptide is Threonine dehydratase (Nicotiana attenuata (Coyote tobacco)).